The sequence spans 187 residues: Cell division protein SepF (187 aa).

A disordered region spans residues 13–74; the sequence is GLAEDDRYAE…PAPATTAQVT (62 aa). The span at 16 to 65 shows a compositional bias: basic and acidic residues; that stretch reads EDDRYAEDTEPETTRPRVEAAREVRVESRHEARPEVRHEPRPEVSVERRP.

The protein belongs to the SepF family. In terms of assembly, homodimer. Interacts with FtsZ.

It localises to the cytoplasm. Cell division protein that is part of the divisome complex and is recruited early to the Z-ring. Probably stimulates Z-ring formation, perhaps through the cross-linking of FtsZ protofilaments. Its function overlaps with FtsA. The protein is Cell division protein SepF of Kineococcus radiotolerans (strain ATCC BAA-149 / DSM 14245 / SRS30216).